Consider the following 70-residue polypeptide: ATP synthase subunit c (70 aa).

The next 2 helical transmembrane spans lie at 4–24 (IAAA…NGLI) and 45–65 (LMFI…VIAF).

Belongs to the ATPase C chain family. As to quaternary structure, F-type ATPases have 2 components, F(1) - the catalytic core - and F(0) - the membrane proton channel. F(1) has five subunits: alpha(3), beta(3), gamma(1), delta(1), epsilon(1). F(0) has three main subunits: a(1), b(2) and c(10-14). The alpha and beta chains form an alternating ring which encloses part of the gamma chain. F(1) is attached to F(0) by a central stalk formed by the gamma and epsilon chains, while a peripheral stalk is formed by the delta and b chains.

It is found in the cell membrane. Functionally, f(1)F(0) ATP synthase produces ATP from ADP in the presence of a proton or sodium gradient. F-type ATPases consist of two structural domains, F(1) containing the extramembraneous catalytic core and F(0) containing the membrane proton channel, linked together by a central stalk and a peripheral stalk. During catalysis, ATP synthesis in the catalytic domain of F(1) is coupled via a rotary mechanism of the central stalk subunits to proton translocation. Its function is as follows. Key component of the F(0) channel; it plays a direct role in translocation across the membrane. A homomeric c-ring of between 10-14 subunits forms the central stalk rotor element with the F(1) delta and epsilon subunits. The polypeptide is ATP synthase subunit c (Bacillus licheniformis (strain ATCC 14580 / DSM 13 / JCM 2505 / CCUG 7422 / NBRC 12200 / NCIMB 9375 / NCTC 10341 / NRRL NRS-1264 / Gibson 46)).